The chain runs to 349 residues: Shematrin-like protein 1 (349 aa).

Positions 1–16 (MLKLVCAVFLIATVSA) are cleaved as a signal peptide.

In terms of tissue distribution, prismatic layer of shell (at protein level).

Its subcellular location is the secreted. The chain is Shematrin-like protein 1 from Margaritifera margaritifera (Freshwater pearl mussel).